The sequence spans 345 residues: MRVADYSFELPDELIARYPTAERTASRLLSLDGNSGQLADLQFTDILEQVNPGDLMVFNNTRVIPARMFGTKQSGGKLEILVERMLDDKRVLAHVRCSKSPKVDSIVCLDGGYEMVMLARHDALFELSLQSDKTILEVLEEVGHMPLPPYIDRPDEDADKERYQTVYNQNPGAVAAPTAGLHFDDAILAALKAKGVNTAFVTLHVGAGTFQPVRVDNILDHKMHSEWAEVPQTVVDLIGETKARGNRVIAVGTTSVRSLESAAKASQGVLQSFSGDTDIFIYPGYQFQVVDAMVTNFHLPESTLIMLLSAFAGFDEVKNAYQHAIAQKYRFFSYGDAMFVTKKAN.

It belongs to the QueA family. In terms of assembly, monomer.

It is found in the cytoplasm. The enzyme catalyses 7-aminomethyl-7-carbaguanosine(34) in tRNA + S-adenosyl-L-methionine = epoxyqueuosine(34) in tRNA + adenine + L-methionine + 2 H(+). It functions in the pathway tRNA modification; tRNA-queuosine biosynthesis. In terms of biological role, transfers and isomerizes the ribose moiety from AdoMet to the 7-aminomethyl group of 7-deazaguanine (preQ1-tRNA) to give epoxyqueuosine (oQ-tRNA). This Shewanella pealeana (strain ATCC 700345 / ANG-SQ1) protein is S-adenosylmethionine:tRNA ribosyltransferase-isomerase.